Here is a 930-residue protein sequence, read N- to C-terminus: Translation initiation factor IF-2 (930 aa).

The tract at residues 51–325 is disordered; the sequence is PGAGKSAAKP…TREIGGVKVP (275 aa). Low complexity-rich tracts occupy residues 56 to 111 and 121 to 162; these read SAAK…KPGV and TPAA…GNNP. Over residues 263-295 the composition is skewed to gly residues; that stretch reads RPGGGPGGGPGRPGGPGGRGGRGNAQGAFGRGG. Positions 296 to 307 are enriched in basic residues; that stretch reads GPRKGRKSKRAK. The segment covering 308-320 has biased composition (basic and acidic residues); sequence RQEFEQQHTREIG. The 175-residue stretch at 422-596 folds into the tr-type G domain; it reads PRPAVVTVMG…LTADAALELT (175 aa). The interval 431 to 438 is G1; the sequence is GHVDHGKT. 431-438 contributes to the GTP binding site; that stretch reads GHVDHGKT. The tract at residues 456-460 is G2; that stretch reads GITQH. Residues 481–484 are G3; it reads DTPG. Residues 481–485 and 535–538 contribute to the GTP site; these read DTPGH and NKID. Residues 535–538 are G4; the sequence is NKID. Positions 571-573 are G5; that stretch reads SAR.

It belongs to the TRAFAC class translation factor GTPase superfamily. Classic translation factor GTPase family. IF-2 subfamily.

Its subcellular location is the cytoplasm. Functionally, one of the essential components for the initiation of protein synthesis. Protects formylmethionyl-tRNA from spontaneous hydrolysis and promotes its binding to the 30S ribosomal subunits. Also involved in the hydrolysis of GTP during the formation of the 70S ribosomal complex. This is Translation initiation factor IF-2 from Micrococcus luteus (strain ATCC 4698 / DSM 20030 / JCM 1464 / CCM 169 / CCUG 5858 / IAM 1056 / NBRC 3333 / NCIMB 9278 / NCTC 2665 / VKM Ac-2230) (Micrococcus lysodeikticus).